Reading from the N-terminus, the 384-residue chain is Glutamate 5-kinase (384 aa).

Position 24 (Lys24) interacts with ATP. Residues Ser64, Asp149, and Asn161 each coordinate substrate. Residues 181 to 182 and 223 to 229 contribute to the ATP site; these read TD and TGGMRTK. One can recognise a PUA domain in the interval 288–370; that stretch reads PGAILIDAGA…RDIQTLLGYT (83 aa).

The protein belongs to the glutamate 5-kinase family.

The protein resides in the cytoplasm. The enzyme catalyses L-glutamate + ATP = L-glutamyl 5-phosphate + ADP. It functions in the pathway amino-acid biosynthesis; L-proline biosynthesis; L-glutamate 5-semialdehyde from L-glutamate: step 1/2. In terms of biological role, catalyzes the transfer of a phosphate group to glutamate to form L-glutamate 5-phosphate. The chain is Glutamate 5-kinase from Xylella fastidiosa (strain M12).